We begin with the raw amino-acid sequence, 255 residues long: MAAIDLNSDLGESYGAWRMGDDEAMLAIVSSANIACGFHAGDPAGIYRTVKAAAEKGVVVGAHVSYPDRVGFGRRDLDATSEELIADVIYQIGALKGVAAAAGTTVRYVKPHGALYNRIANDAKQGQAVIDGIKAIDPSLVLMGLANAPILDLARKAGLAVVAEAFADRAYTPEGQLVSRREAGAVLHDAAKIAERMVQLAREGTLEAIDGSIIKIEAQSICVHGDSPGAVAIAQEIRRRFEADGIAIRSFASDR.

The protein belongs to the LamB/PxpA family. In terms of assembly, forms a complex composed of PxpA, PxpB and PxpC.

The enzyme catalyses 5-oxo-L-proline + ATP + 2 H2O = L-glutamate + ADP + phosphate + H(+). Functionally, catalyzes the cleavage of 5-oxoproline to form L-glutamate coupled to the hydrolysis of ATP to ADP and inorganic phosphate. The chain is 5-oxoprolinase subunit A 1 from Agrobacterium fabrum (strain C58 / ATCC 33970) (Agrobacterium tumefaciens (strain C58)).